Reading from the N-terminus, the 122-residue chain is uncharacterized protein (122 aa).

This is an uncharacterized protein from Acidianus sp. F28 (AFV-2).